The following is a 617-amino-acid chain: BTB/POZ domain-containing protein At3g08570 (617 aa).

Positions 36–106 (GDITIVVDGE…CYGINFEITI (71 aa)) constitute a BTB domain. The NPH3 domain maps to 210 to 490 (EWWIEDLSAL…VRVLYSEQLR (281 aa)). Residue Y431 is modified to Phosphotyrosine. 2 disordered regions span residues 505-525 (LSSQ…RDTY) and 585-617 (GGGP…ESMF). The segment covering 602 to 617 (SRLERKTVRSRPESMF) has biased composition (basic and acidic residues).

The protein belongs to the NPH3 family.

It functions in the pathway protein modification; protein ubiquitination. Its function is as follows. May act as a substrate-specific adapter of an E3 ubiquitin-protein ligase complex (CUL3-RBX1-BTB) which mediates the ubiquitination and subsequent proteasomal degradation of target proteins. This chain is BTB/POZ domain-containing protein At3g08570, found in Arabidopsis thaliana (Mouse-ear cress).